Reading from the N-terminus, the 65-residue chain is Large ribosomal subunit protein bL35 (65 aa).

Belongs to the bacterial ribosomal protein bL35 family.

The sequence is that of Large ribosomal subunit protein bL35 from Rubrobacter xylanophilus (strain DSM 9941 / JCM 11954 / NBRC 16129 / PRD-1).